Reading from the N-terminus, the 436-residue chain is Enolase (436 aa).

Q167 contributes to the (2R)-2-phosphoglycerate binding site. E209 acts as the Proton donor in catalysis. D246, E291, and D318 together coordinate Mg(2+). K343, R372, S373, and K394 together coordinate (2R)-2-phosphoglycerate. K343 acts as the Proton acceptor in catalysis.

Belongs to the enolase family. Component of the RNA degradosome, a multiprotein complex involved in RNA processing and mRNA degradation. The cofactor is Mg(2+).

It localises to the cytoplasm. The protein resides in the secreted. Its subcellular location is the cell surface. It carries out the reaction (2R)-2-phosphoglycerate = phosphoenolpyruvate + H2O. The protein operates within carbohydrate degradation; glycolysis; pyruvate from D-glyceraldehyde 3-phosphate: step 4/5. Its function is as follows. Catalyzes the reversible conversion of 2-phosphoglycerate (2-PG) into phosphoenolpyruvate (PEP). It is essential for the degradation of carbohydrates via glycolysis. The polypeptide is Enolase (Haemophilus influenzae (strain PittGG)).